The chain runs to 278 residues: Sulfur carrier protein FdhD (278 aa).

Cysteine 121 serves as the catalytic Cysteine persulfide intermediate. 260–265 is a binding site for Mo-bis(molybdopterin guanine dinucleotide); the sequence is FCKPGR.

Belongs to the FdhD family.

The protein resides in the cytoplasm. Functionally, required for formate dehydrogenase (FDH) activity. Acts as a sulfur carrier protein that transfers sulfur from IscS to the molybdenum cofactor prior to its insertion into FDH. The chain is Sulfur carrier protein FdhD from Salmonella typhi.